Here is a 406-residue protein sequence, read N- to C-terminus: Peptidase T (406 aa).

Residue histidine 81 participates in Zn(2+) binding. The active site involves aspartate 83. A Zn(2+)-binding site is contributed by aspartate 142. Glutamate 176 (proton acceptor) is an active-site residue. Positions 177, 199, and 381 each coordinate Zn(2+).

It belongs to the peptidase M20B family. Zn(2+) serves as cofactor.

It localises to the cytoplasm. The enzyme catalyses Release of the N-terminal residue from a tripeptide.. Functionally, cleaves the N-terminal amino acid of tripeptides. This Streptococcus pneumoniae serotype 2 (strain D39 / NCTC 7466) protein is Peptidase T.